The following is a 436-amino-acid chain: 3-ketoacyl-CoA thiolase (436 aa).

The Acyl-thioester intermediate role is filled by cysteine 99. Catalysis depends on proton acceptor residues histidine 392 and cysteine 422.

It belongs to the thiolase-like superfamily. Thiolase family. Heterotetramer of two alpha chains (FadJ) and two beta chains (FadI).

The protein localises to the cytoplasm. The catalysed reaction is an acyl-CoA + acetyl-CoA = a 3-oxoacyl-CoA + CoA. Its pathway is lipid metabolism; fatty acid beta-oxidation. Its function is as follows. Catalyzes the final step of fatty acid oxidation in which acetyl-CoA is released and the CoA ester of a fatty acid two carbons shorter is formed. The protein is 3-ketoacyl-CoA thiolase of Aeromonas salmonicida (strain A449).